A 465-amino-acid polypeptide reads, in one-letter code: Kynureninase (465 aa).

Pyridoxal 5'-phosphate is bound by residues Leu116, Thr117, Phe144–Asp147, Asp231, His234, and Tyr256. Lys257 carries the post-translational modification N6-(pyridoxal phosphate)lysine. Residues Trp291 and Asn319 each contribute to the pyridoxal 5'-phosphate site.

Belongs to the kynureninase family. As to quaternary structure, homodimer. Pyridoxal 5'-phosphate serves as cofactor.

It is found in the cytoplasm. It carries out the reaction L-kynurenine + H2O = anthranilate + L-alanine + H(+). It catalyses the reaction 3-hydroxy-L-kynurenine + H2O = 3-hydroxyanthranilate + L-alanine + H(+). It functions in the pathway amino-acid degradation; L-kynurenine degradation; L-alanine and anthranilate from L-kynurenine: step 1/1. It participates in cofactor biosynthesis; NAD(+) biosynthesis; quinolinate from L-kynurenine: step 2/3. In terms of biological role, catalyzes the cleavage of L-kynurenine (L-Kyn) and L-3-hydroxykynurenine (L-3OHKyn) into anthranilic acid (AA) and 3-hydroxyanthranilic acid (3-OHAA), respectively. This Scheffersomyces stipitis (strain ATCC 58785 / CBS 6054 / NBRC 10063 / NRRL Y-11545) (Yeast) protein is Kynureninase.